Consider the following 142-residue polypeptide: Large ribosomal subunit protein uL13 (142 aa).

This sequence belongs to the universal ribosomal protein uL13 family. In terms of assembly, part of the 50S ribosomal subunit.

Its function is as follows. This protein is one of the early assembly proteins of the 50S ribosomal subunit, although it is not seen to bind rRNA by itself. It is important during the early stages of 50S assembly. The sequence is that of Large ribosomal subunit protein uL13 from Cronobacter sakazakii (strain ATCC BAA-894) (Enterobacter sakazakii).